An 809-amino-acid polypeptide reads, in one-letter code: Ribonuclease Z 1 (809 aa).

Positions 74 to 93 (ISSPDTYDSSSSSSTTSVSD) are disordered.

It belongs to the RNase Z family. Requires Zn(2+) as cofactor.

Its subcellular location is the nucleus. It is found in the cytoplasm. The enzyme catalyses Endonucleolytic cleavage of RNA, removing extra 3' nucleotides from tRNA precursor, generating 3' termini of tRNAs. A 3'-hydroxy group is left at the tRNA terminus and a 5'-phosphoryl group is left at the trailer molecule.. Functionally, zinc phosphodiesterase, which displays some tRNA 3'-processing endonuclease activity. May be involved in tRNA maturation, by removing a 3'-trailer from precursor tRNA. This chain is Ribonuclease Z 1 (trz1), found in Schizosaccharomyces pombe (strain 972 / ATCC 24843) (Fission yeast).